The sequence spans 155 residues: Ribosomal RNA large subunit methyltransferase H (155 aa).

S-adenosyl-L-methionine contacts are provided by residues Leu72, Gly103, and 122–127 (LSPLTF).

Belongs to the RNA methyltransferase RlmH family. In terms of assembly, homodimer.

It is found in the cytoplasm. The catalysed reaction is pseudouridine(1915) in 23S rRNA + S-adenosyl-L-methionine = N(3)-methylpseudouridine(1915) in 23S rRNA + S-adenosyl-L-homocysteine + H(+). Functionally, specifically methylates the pseudouridine at position 1915 (m3Psi1915) in 23S rRNA. This chain is Ribosomal RNA large subunit methyltransferase H, found in Alkalilimnicola ehrlichii (strain ATCC BAA-1101 / DSM 17681 / MLHE-1).